A 307-amino-acid chain; its full sequence is Sex-lethal homolog (307 aa).

RRM domains are found at residues 85–163 and 171–251; these read TNLI…YARP and TNLY…LAEE. Over residues 285-299 the composition is skewed to basic residues; the sequence is HRGRHNKNRNQKPHP. The tract at residues 285 to 307 is disordered; it reads HRGRHNKNRNQKPHPYHNPQKFI.

The protein resides in the nucleus. Unknown; apparently not involved in somatic sex determination. In Chrysomya rufifacies (Hairy maggot blowfly), this protein is Sex-lethal homolog (SXL).